A 644-amino-acid chain; its full sequence is Threonine--tRNA ligase (644 aa).

A TGS domain is found at 1-61; that stretch reads MKVSIEGSVV…TACETLEPVY (61 aa). The catalytic stretch occupies residues 241–532; that stretch reads DHRKLGTQLD…LTEHFAGAFP (292 aa). Zn(2+) contacts are provided by cysteine 333, histidine 384, and histidine 509.

The protein belongs to the class-II aminoacyl-tRNA synthetase family. As to quaternary structure, homodimer. Zn(2+) is required as a cofactor.

Its subcellular location is the cytoplasm. It carries out the reaction tRNA(Thr) + L-threonine + ATP = L-threonyl-tRNA(Thr) + AMP + diphosphate + H(+). Catalyzes the attachment of threonine to tRNA(Thr) in a two-step reaction: L-threonine is first activated by ATP to form Thr-AMP and then transferred to the acceptor end of tRNA(Thr). Also edits incorrectly charged L-seryl-tRNA(Thr). This is Threonine--tRNA ligase from Oleidesulfovibrio alaskensis (strain ATCC BAA-1058 / DSM 17464 / G20) (Desulfovibrio alaskensis).